We begin with the raw amino-acid sequence, 96 residues long: Pore-forming peptide amoebapore B (96 aa).

A signal peptide spans 1-19 (MRAIIFVLIFAIAFAATRE). One can recognise a Saposin B-type domain in the interval 20 to 96 (GAILCNLCKD…VVVCEKIHAC (77 aa)). 3 disulfides stabilise this stretch: C24-C96, C27-C90, and C54-C65.

Monomer. Homodimer. Hexamer; formed during insertion in the membrane.

The protein resides in the cytoplasmic granule. Its function is as follows. Forms pores in the cell membrane of host cells. Has antibacterial activity against M.luteus, no activity against E.coli. Implicated in the cytolytic activity of the parasite. This Entamoeba histolytica (strain ATCC 30459 / HM-1:IMSS / ABRM) protein is Pore-forming peptide amoebapore B.